The primary structure comprises 254 residues: Small ribosomal subunit protein uS2 (254 aa).

It belongs to the universal ribosomal protein uS2 family.

The chain is Small ribosomal subunit protein uS2 from Legionella pneumophila (strain Corby).